Reading from the N-terminus, the 809-residue chain is Transitional endoplasmic reticulum ATPase homolog 1 (809 aa).

The tract at residues M1–A21 is disordered. The segment covering Q8 to A21 has biased composition (basic and acidic residues). Residues P253–L259, N354, H390, and G527–L532 each bind ATP. The tract at residues F779–N809 is disordered. The interaction with ufd-2 stretch occupies residues D803 to N809.

It belongs to the AAA ATPase family. CDC48 subfamily. As to quaternary structure, homohexamer; oligomerization is ATP-independent. Forms a ring-shaped particle of 18.3 nm diameter, that displays 6-fold radial symmetry. Interacts with cdc-48.2 and thus may form heterohexamers. Forms a complex composed of cdc-48.1, him-6 and crp-1; within the complex, interacts with helicase him-6 and GTPase crp-1. Forms a complex composed of deubiquitinating enzyme atx-3, adapter ubxn-5 and cdc-48.1; within the complex, interacts (via N-terminus) with ubxn-5 and with atx-3. Forms a complex composed of deubiquitinating enzyme atx-3, E4 ubiquitin-protein ligase ufd-2 and cdc-48.1; within the complex, interacts with atx-3 and (via DDDLYN motif) with ufd-2. Interacts (via N-terminus) with atx-3 (via RRDR motif); the interaction is not required for atx-3 enzymatic activity. Forms a complex composed of cdc-48.1, myosin chaperone unc-45, ubiquitin-protein ligases ufd-2 and chn-1; within the complex, interacts (via DDDLYN motif) with ufd-2 and targets myosin chaperone unc-45 for proteasomal degradation. Forms a complex composed of ubxn-3, ufd-1, npl-4.1 and cdc-48.1; within the complex, interacts (via N-terminus) with ubxn-3 (via FPK motif) and with ufd-1. Forms a complex composed of ubxn-3, cdc-48.1 and/or cdc-48.2 and substrate cdt-1. Interacts (via N-terminus) with ubxn-1. Interacts (via N-terminus) with ubxn-2. Interacts (via N-terminus) with ubxn-4. Interacts with ubxn-6. Interacts with ufd-3. Does not interact with air-2. In terms of tissue distribution, expressed in germ cells and spermatheca. Expressed in body wall muscles.

The protein localises to the cytoplasm. It localises to the perinuclear region. The catalysed reaction is ATP + H2O = ADP + phosphate + H(+). The first ATP-binding region has low ATPase activity. The second ATP-binding region is responsible for ATPase activity. ATP binding to the first ATP-binding region induces intrinsic activity of the second ATP-binding region. While ATP binding to the first ATP-binding region appears to prevent ATP hydrolysis by the second ATP-binding region, ADP-binding to first region promotes the coordinate and cooperative ATPase cycle of the second ATP-binding region. ATP binding to the first ATP-binding region induces a conformational change, promoting the rotation of the first ATP-binding region relative to the second ATP-binding region in the hexamer. Inhibited by N-ethylmaleimide (NEM). In terms of biological role, ATP-dependent chaperone which probably uses the energy provided by ATP hydrolysis to generate mechanical force to unfold substrate proteins, disassemble protein complexes, and disaggregate protein aggregates. Can also prevent aggregation of unfolded proteins also in an ATP-independent manner. Targets polyubiquitinated proteins for proteasomal degradation by binding to 'Lys-48'-linked polyubiquitin chains. Involved in the cytoplasmic elimination of misfolded proteins exported from the ER. This pathway, known as ERAD, prevents the activation of the unfolded protein response (UPR) caused by the accumulation of misfolded proteins in the ER. In association with helicase him-6 and GTPase crp-1, regulates the unfolded protein response (UPR) following ER stress, probably independently of the ERAD pathway. Together with udf-2 and chn-1, regulates myosin assembly in body wall muscles by targeting myosin chaperone unc-45 for proteasomal degradation. Together with the ufd-1-npl-4 complex, controls the switch from spermatogenesis to oogenesis by regulating E3 ligase cul-2 complex-mediated tra-1 proteasomal degradation. During oocyte meiosis and together with cdc-48.2, required for chromosome condensation at the diakinesis phase in prophase I and for progression of metaphase I. During the first embryonic cell division, regulates DNA replication and thus chromosome segregation and decondensation, and nuclear envelope re-assembly. In S phase and in association with ufd-1, npl-4.1 and/or npl-4.2 and ubxn-3, ensures the degradation of DNA licensing factor cdt-1 after the initiation of DNA replication and thus the disassembly of the DNA replication CMG helicase complex by promoting the dissociation from chromatin of several of its components including cdc-45 and sld-5. Regulates ubxn-3 nuclear localization during S phase. During the first embryonic cell divisions and together with cdc-48.2, regulates the re-assembly of the nuclear envelope after mitosis possibly by inactivating kinase air-2, a component of the chromosomal passenger complex (CPC). However, in another study, cdc-48.1 does not appear to be implicated in the regulation of air-2. The sequence is that of Transitional endoplasmic reticulum ATPase homolog 1 from Caenorhabditis elegans.